Consider the following 207-residue polypeptide: NAD--protein ADP-ribosyltransferase modB (207 aa).

Arg73 is an NAD(+) binding site. Residue Glu173 is part of the active site.

The protein belongs to the Tevenvirinae NAD--protein ADP-ribosyltransferase modA family.

Its subcellular location is the virion. It carries out the reaction L-arginyl-[protein] + NAD(+) = N(omega)-(ADP-D-ribosyl)-L-arginyl-[protein] + nicotinamide + H(+). Its function is as follows. ADP-ribosyltransferase that regulates transcription by ADP-ribosylation of host ribosomal protein S1. Additional identified targets include proteins involved in either translation or cellular metabolism such as elongation factor-Tu or trigger factor. Also reprograms the host's gene-expression system by RNAylating host ribosomal protein S1. ModB can attach NAD-capped RNAs to target proteins post-transcriptionally resulting in covalent RNA-protein conjugates. The chain is NAD--protein ADP-ribosyltransferase modB from Enterobacteria phage T4 (Bacteriophage T4).